The sequence spans 445 residues: Exodeoxyribonuclease 7 large subunit (445 aa).

The protein belongs to the XseA family. In terms of assembly, heterooligomer composed of large and small subunits.

It is found in the cytoplasm. It catalyses the reaction Exonucleolytic cleavage in either 5'- to 3'- or 3'- to 5'-direction to yield nucleoside 5'-phosphates.. Its function is as follows. Bidirectionally degrades single-stranded DNA into large acid-insoluble oligonucleotides, which are then degraded further into small acid-soluble oligonucleotides. The chain is Exodeoxyribonuclease 7 large subunit from Xanthomonas oryzae pv. oryzae (strain KACC10331 / KXO85).